Consider the following 500-residue polypeptide: Probable malate:quinone oxidoreductase (500 aa).

Belongs to the MQO family. Requires FAD as cofactor.

The catalysed reaction is (S)-malate + a quinone = a quinol + oxaloacetate. The protein operates within carbohydrate metabolism; tricarboxylic acid cycle; oxaloacetate from (S)-malate (quinone route): step 1/1. This is Probable malate:quinone oxidoreductase from Bordetella avium (strain 197N).